Consider the following 465-residue polypeptide: Putrescine aminotransferase (465 aa).

Pyridoxal 5'-phosphate is bound by residues 150-151 (GT) and Q274. K300 bears the N6-(pyridoxal phosphate)lysine mark. T332 lines the pyridoxal 5'-phosphate pocket.

The protein belongs to the class-III pyridoxal-phosphate-dependent aminotransferase family. Putrescine aminotransferase subfamily. It depends on pyridoxal 5'-phosphate as a cofactor.

It carries out the reaction an alkane-alpha,omega-diamine + 2-oxoglutarate = an omega-aminoaldehyde + L-glutamate. The catalysed reaction is putrescine + 2-oxoglutarate = 1-pyrroline + L-glutamate + H2O. The enzyme catalyses cadaverine + 2-oxoglutarate = 5-aminopentanal + L-glutamate. The protein operates within amine and polyamine degradation; putrescine degradation; 4-aminobutanal from putrescine (transaminase route): step 1/1. In terms of biological role, catalyzes the aminotransferase reaction from putrescine to 2-oxoglutarate, leading to glutamate and 4-aminobutanal, which spontaneously cyclizes to form 1-pyrroline. This is the first step in one of two pathways for putrescine degradation, where putrescine is converted into 4-aminobutanoate (gamma-aminobutyrate or GABA) via 4-aminobutanal. Also functions as a cadaverine transaminase in a a L-lysine degradation pathway to succinate that proceeds via cadaverine, glutarate and L-2-hydroxyglutarate. In Cronobacter sakazakii (strain ATCC BAA-894) (Enterobacter sakazakii), this protein is Putrescine aminotransferase.